We begin with the raw amino-acid sequence, 1634 residues long: Probable serine/threonine-protein kinase DDB_G0282895 (1634 aa).

The MORN 1 repeat unit spans residues Tyr40 to Tyr63. The interval Gln84 to Asn131 is disordered. Residues Lys89–Pro109 are compositionally biased toward low complexity. Residues Ile110 to Gln119 are compositionally biased toward polar residues. A compositionally biased stretch (low complexity) spans Asn120 to Asn131. One copy of the MORN 2 repeat lies at Tyr169–Ser191. 2 stretches are compositionally biased toward low complexity: residues Ser273 to Thr292 and Ser318 to Ser339. Disordered regions lie at residues Ser273–Gln367, Thr658–Val750, and Ser783–Gln816. Positions Gly340–Ser351 are enriched in polar residues. 3 stretches are compositionally biased toward low complexity: residues Gln352–Gln367, Thr658–Thr688, and Pro703–Ser715. The segment covering Asp716–Ser732 has biased composition (polar residues). Over residues Asn787 to Asn813 the composition is skewed to low complexity. A helical transmembrane segment spans residues Ile1255 to Tyr1275. The Protein kinase domain maps to Leu1377–Cys1634. ATP contacts are provided by residues Leu1383–Val1391 and Lys1404. The Proton acceptor role is filled by Asp1500.

This sequence belongs to the protein kinase superfamily. TKL Ser/Thr protein kinase family.

It localises to the membrane. The enzyme catalyses L-seryl-[protein] + ATP = O-phospho-L-seryl-[protein] + ADP + H(+). It carries out the reaction L-threonyl-[protein] + ATP = O-phospho-L-threonyl-[protein] + ADP + H(+). This chain is Probable serine/threonine-protein kinase DDB_G0282895, found in Dictyostelium discoideum (Social amoeba).